A 306-amino-acid chain; its full sequence is Pantothenate kinase (306 aa).

Position 90–97 (90–97 (GSVAVGKS)) interacts with ATP.

It belongs to the prokaryotic pantothenate kinase family.

It is found in the cytoplasm. The enzyme catalyses (R)-pantothenate + ATP = (R)-4'-phosphopantothenate + ADP + H(+). It functions in the pathway cofactor biosynthesis; coenzyme A biosynthesis; CoA from (R)-pantothenate: step 1/5. This chain is Pantothenate kinase, found in Lactococcus lactis subsp. cremoris (strain MG1363).